The primary structure comprises 399 residues: Cytochrome P450 FAS1 (399 aa).

Heme is bound at residue C349.

Belongs to the cytochrome P450 family. Heme serves as cofactor.

It is found in the cytoplasm. Functionally, may be involved in the biosynthesis of cytokinin phytohormones and in host plant fasciation (leafy gall). This Rhodococcoides fascians (Rhodococcus fascians) protein is Cytochrome P450 FAS1 (fas1).